Reading from the N-terminus, the 82-residue chain is Photosystem I iron-sulfur center (82 aa).

4Fe-4S ferredoxin-type domains lie at 2–31 and 37–68; these read SHTV…MVPW and GQIA…VRVY. The [4Fe-4S] cluster site is built by cysteine 11, cysteine 14, cysteine 17, cysteine 21, cysteine 48, cysteine 51, cysteine 54, and cysteine 58.

In terms of assembly, the eukaryotic PSI reaction center is composed of at least 11 subunits. It depends on [4Fe-4S] cluster as a cofactor.

The protein resides in the plastid. It is found in the chloroplast thylakoid membrane. It carries out the reaction reduced [plastocyanin] + hnu + oxidized [2Fe-2S]-[ferredoxin] = oxidized [plastocyanin] + reduced [2Fe-2S]-[ferredoxin]. In terms of biological role, apoprotein for the two 4Fe-4S centers FA and FB of photosystem I (PSI); essential for photochemical activity. FB is the terminal electron acceptor of PSI, donating electrons to ferredoxin. The C-terminus interacts with PsaA/B/D and helps assemble the protein into the PSI complex. Required for binding of PsaD and PsaE to PSI. PSI is a plastocyanin/cytochrome c6-ferredoxin oxidoreductase, converting photonic excitation into a charge separation, which transfers an electron from the donor P700 chlorophyll pair to the spectroscopically characterized acceptors A0, A1, FX, FA and FB in turn. This is Photosystem I iron-sulfur center from Trieres chinensis (Marine centric diatom).